Reading from the N-terminus, the 711-residue chain is Hepatocyte growth factor-like protein (711 aa).

The signal sequence occupies residues 1-18; that stretch reads MGWLPLLLLLTQCLGVPG. The 85-residue stretch at 21–105 folds into the PAN domain; that stretch reads SPLNDFQVLR…GRCDLFQKKD (85 aa). Disulfide bonds link Cys-56–Cys-78, Cys-60–Cys-66, Cys-110–Cys-186, Cys-131–Cys-169, Cys-157–Cys-181, Cys-191–Cys-268, Cys-194–Cys-324, Cys-212–Cys-251, Cys-240–Cys-263, Cys-283–Cys-361, Cys-304–Cys-343, Cys-332–Cys-355, Cys-370–Cys-448, Cys-391–Cys-431, Cys-419–Cys-443, Cys-468–Cys-588, Cys-507–Cys-523, Cys-602–Cys-667, Cys-632–Cys-646, and Cys-657–Cys-685. N-linked (GlcNAc...) asparagine glycosylation occurs at Asn-72. 4 Kringle domains span residues 110 to 186, 191 to 268, 283 to 361, and 370 to 448; these read CIMN…IKSC, CVWC…LPRC, CFRG…IRRC, and CYHG…LRRC. Asn-296 is a glycosylation site (N-linked (GlcNAc...) asparagine). The Peptidase S1 domain occupies 484-709; it reads VVGGHPGNSP…FVDWIHKVMR (226 aa). N-linked (GlcNAc...) asparagine glycosylation is present at Asn-615.

Belongs to the peptidase S1 family. Plasminogen subfamily. Dimer of an alpha chain and a beta chain linked by a disulfide bond. Interacts (via beta chain) with MST1R (via SEMA domain). In terms of processing, cleaved after Arg-483, probably by HPN/Hepsin, to yield the active form consisting of two disulfide-linked chains.

Its subcellular location is the secreted. This Homo sapiens (Human) protein is Hepatocyte growth factor-like protein (MST1).